Here is a 578-residue protein sequence, read N- to C-terminus: Probable arginine--tRNA ligase, mitochondrial (578 aa).

Residues 1–16 (MACGFRRAIACQLSRV) constitute a mitochondrion transit peptide. Residues 133-135 (SPN), His-144, Tyr-322, Asp-326, and Gln-350 each bind L-arginine. Positions 133–144 (SPNVAKKFHVGH) match the 'HIGH' region motif. Lys-568 is subject to N6-acetyllysine.

The protein belongs to the class-I aminoacyl-tRNA synthetase family.

It is found in the mitochondrion membrane. The enzyme catalyses tRNA(Arg) + L-arginine + ATP = L-arginyl-tRNA(Arg) + AMP + diphosphate. Functionally, catalyzes the attachment of arginine to tRNA(Arg) in a two-step reaction: arginine is first activated by ATP to form Arg-AMP and then transferred to the acceptor end of tRNA(Arg). This is Probable arginine--tRNA ligase, mitochondrial (RARS2) from Pongo abelii (Sumatran orangutan).